The chain runs to 424 residues: Endoglucanase 1 (424 aa).

The signal sequence occupies residues Met1 to Ala18. 9 cysteine pairs are disulfide-bonded: Cys35-Cys41, Cys68-Cys90, Cys80-Cys86, Cys156-Cys384, Cys188-Cys211, Cys192-Cys210, Cys231-Cys250, Cys239-Cys244, and Cys255-Cys331. The N-linked (GlcNAc...) asparagine glycan is linked to Asn76. The active-site Nucleophile is the Glu213. The active-site Proton donor is the Glu218. N-linked (GlcNAc...) asparagine glycosylation is found at Asn271 and Asn385.

The protein belongs to the glycosyl hydrolase 7 (cellulase C) family. As to quaternary structure, monomer.

It is found in the secreted. It catalyses the reaction Endohydrolysis of (1-&gt;4)-beta-D-glucosidic linkages in cellulose, lichenin and cereal beta-D-glucans.. Functionally, endoglucanase that is involved in the biological conversion of cellulose to glucose. Hydrolyzes internal beta-1,4-glucosidic bonds. The sequence is that of Endoglucanase 1 from Pyricularia oryzae (strain 70-15 / ATCC MYA-4617 / FGSC 8958) (Rice blast fungus).